The chain runs to 460 residues: tRNA(Ile)-lysidine synthase (460 aa).

Serine 30–serine 35 contributes to the ATP binding site.

Belongs to the tRNA(Ile)-lysidine synthase family.

The protein resides in the cytoplasm. The catalysed reaction is cytidine(34) in tRNA(Ile2) + L-lysine + ATP = lysidine(34) in tRNA(Ile2) + AMP + diphosphate + H(+). Its function is as follows. Ligates lysine onto the cytidine present at position 34 of the AUA codon-specific tRNA(Ile) that contains the anticodon CAU, in an ATP-dependent manner. Cytidine is converted to lysidine, thus changing the amino acid specificity of the tRNA from methionine to isoleucine. In Yersinia pseudotuberculosis serotype I (strain IP32953), this protein is tRNA(Ile)-lysidine synthase.